A 283-amino-acid chain; its full sequence is Pantothenate synthetase (283 aa).

30 to 37 serves as a coordination point for ATP; sequence MGALHEGH. Catalysis depends on histidine 37, which acts as the Proton donor. Glutamine 61 serves as a coordination point for (R)-pantoate. Beta-alanine is bound at residue glutamine 61. 147 to 150 provides a ligand contact to ATP; the sequence is GEKD. Glutamine 153 lines the (R)-pantoate pocket. ATP contacts are provided by residues isoleucine 176 and 184–187; that span reads VSSR.

Belongs to the pantothenate synthetase family. As to quaternary structure, homodimer.

The protein resides in the cytoplasm. It carries out the reaction (R)-pantoate + beta-alanine + ATP = (R)-pantothenate + AMP + diphosphate + H(+). Its pathway is cofactor biosynthesis; (R)-pantothenate biosynthesis; (R)-pantothenate from (R)-pantoate and beta-alanine: step 1/1. Catalyzes the condensation of pantoate with beta-alanine in an ATP-dependent reaction via a pantoyl-adenylate intermediate. The protein is Pantothenate synthetase of Pelodictyon phaeoclathratiforme (strain DSM 5477 / BU-1).